A 271-amino-acid chain; its full sequence is Phosphate import ATP-binding protein PstB 2 (271 aa).

Positions 25 to 266 (MATEDLHVYY…PQQKQTEDYI (242 aa)) constitute an ABC transporter domain. 57–64 (GPSGCGKS) serves as a coordination point for ATP.

Belongs to the ABC transporter superfamily. Phosphate importer (TC 3.A.1.7) family. As to quaternary structure, the complex is composed of two ATP-binding proteins (PstB), two transmembrane proteins (PstC and PstA) and a solute-binding protein (PstS).

It is found in the cell membrane. The catalysed reaction is phosphate(out) + ATP + H2O = ADP + 2 phosphate(in) + H(+). Functionally, part of the ABC transporter complex PstSACB involved in phosphate import. Responsible for energy coupling to the transport system. This is Phosphate import ATP-binding protein PstB 2 from Listeria monocytogenes serotype 4b (strain F2365).